A 310-amino-acid chain; its full sequence is Probable manganese-dependent inorganic pyrophosphatase (310 aa).

Mn(2+) contacts are provided by histidine 9, aspartate 13, aspartate 15, aspartate 76, histidine 98, and aspartate 150.

Belongs to the PPase class C family. Mn(2+) serves as cofactor.

It localises to the cytoplasm. It carries out the reaction diphosphate + H2O = 2 phosphate + H(+). This Streptococcus thermophilus (strain CNRZ 1066) protein is Probable manganese-dependent inorganic pyrophosphatase.